The following is a 103-amino-acid chain: Co-chaperonin GroES (103 aa).

It belongs to the GroES chaperonin family. In terms of assembly, heptamer of 7 subunits arranged in a ring. Interacts with the chaperonin GroEL.

It localises to the cytoplasm. Together with the chaperonin GroEL, plays an essential role in assisting protein folding. The GroEL-GroES system forms a nano-cage that allows encapsulation of the non-native substrate proteins and provides a physical environment optimized to promote and accelerate protein folding. GroES binds to the apical surface of the GroEL ring, thereby capping the opening of the GroEL channel. The polypeptide is Co-chaperonin GroES (Trichodesmium erythraeum (strain IMS101)).